The sequence spans 132 residues: Small ribosomal subunit protein uS8c (132 aa).

The protein belongs to the universal ribosomal protein uS8 family. In terms of assembly, part of the 30S ribosomal subunit.

Its subcellular location is the plastid. The protein resides in the chloroplast. Its function is as follows. One of the primary rRNA binding proteins, it binds directly to 16S rRNA central domain where it helps coordinate assembly of the platform of the 30S subunit. The chain is Small ribosomal subunit protein uS8c (rps8) from Nymphaea alba (White water-lily).